The primary structure comprises 211 residues: MGKRPIIIGVAGGTGSGKTTVAKEIFYQFNEKSIVLIEQDAYYKDQSQLSLEERLQTNYDHPLAFDNDLLIEHLHSLLNGQAIEKPVYDYKLHTRSNEVILVEPKDVIILEGILLLEDERLRELMDIKLFVDTDADIRIIRRMVRDIRERGRTLESVIEQYTKVVRPMHMQFIEPTKRYADVIIPEGGQNRVAIDLMVTKIRAIIEEKAVL.

An ATP-binding site is contributed by 12 to 19 (GGTGSGKT).

It belongs to the uridine kinase family.

It localises to the cytoplasm. The catalysed reaction is uridine + ATP = UMP + ADP + H(+). It catalyses the reaction cytidine + ATP = CMP + ADP + H(+). Its pathway is pyrimidine metabolism; CTP biosynthesis via salvage pathway; CTP from cytidine: step 1/3. The protein operates within pyrimidine metabolism; UMP biosynthesis via salvage pathway; UMP from uridine: step 1/1. The sequence is that of Uridine kinase from Halalkalibacterium halodurans (strain ATCC BAA-125 / DSM 18197 / FERM 7344 / JCM 9153 / C-125) (Bacillus halodurans).